Consider the following 60-residue polypeptide: UI (60 aa).

Over residues 1 to 14 (AAAAGDSAASDLLG) the composition is skewed to low complexity. The interval 1–22 (AAAAGDSAASDLLGDNILRSED) is disordered. A Valine amide modification is found at Val-60.

The protein belongs to the sauvagine/corticotropin-releasing factor/urotensin I family.

The protein resides in the secreted. Urotensin is found in the teleost caudal neurosecretory system. It has a suggested role in osmoregulation and as a corticotropin-releasing factor. The non-hormonal portion of this precursor may be a urotensin binding protein, urophysin. In Platichthys flesus (European flounder), this protein is UI.